Reading from the N-terminus, the 206-residue chain is Venom allergen 5 (206 aa).

4 disulfide bridges follow: cysteine 4-cysteine 16, cysteine 8-cysteine 104, cysteine 28-cysteine 96, and cysteine 172-cysteine 189. Residues 48-191 form the SCP domain; sequence EEHNRFRQKV…MKIHYLICNY (144 aa).

This sequence belongs to the CRISP family. Venom allergen 5-like subfamily. Expressed by the venom gland.

The protein localises to the secreted. The protein is Venom allergen 5 of Polistes gallicus (Paper wasp).